A 195-amino-acid chain; its full sequence is Glycine-rich protein A3 (195 aa).

2 disordered regions span residues 23-103 (AGGG…GVAG) and 159-182 (VMES…GSNL). Residues 47–77 (PAGGGYPPQGYPPAGGGYPPQGYPPAGGGYP) show a composition bias toward gly residues. A compositionally biased stretch (low complexity) spans 82 to 94 (PPAGHHSGSSAPH). A compositionally biased stretch (basic and acidic residues) spans 163–175 (LSRESTGRARSTD).

This Daucus carota (Wild carrot) protein is Glycine-rich protein A3.